The chain runs to 618 residues: ADP,ATP carrier protein 2, chloroplastic (618 aa).

The N-terminal 76 residues, 1–76 (MEGLIQTRGI…KERSRGFICK (76 aa)), are a transit peptide targeting the chloroplast. Residue Ala77 is modified to N-acetylalanine. Transmembrane regions (helical) follow at residues 110 to 130 (LKKI…YTIL), 148 to 168 (IIPF…MLLY), 179 to 199 (ALFY…GFVM), 237 to 257 (LFYV…FWGF), 270 to 289 (FYPL…GRTV), 312 to 332 (AMMS…WWVN), 368 to 388 (LATL…TWKS), 401 to 421 (SAFM…MMLL), 441 to 461 (VLLL…PFAP), 464 to 484 (AKLG…QNIF), and 542 to 562 (LANS…AWLA). Residues 586 to 618 (RASSVKIPVVSQEDAPSGETTSQLSEKSTPTGI) form a disordered region. The span at 603-618 (GETTSQLSEKSTPTGI) shows a compositional bias: polar residues.

It belongs to the ADP/ATP translocase tlc (TC 2.A.12.2) family.

It is found in the plastid. Its subcellular location is the chloroplast membrane. This Arabidopsis thaliana (Mouse-ear cress) protein is ADP,ATP carrier protein 2, chloroplastic (AATP2).